The following is a 640-amino-acid chain: MVLFLIIAAIIIGLLLWKWLDVRSTDELTSMVKLLGSGNGQHVLSNAFQVDEKSKRHGGELVASVLKAHDVEEIFVLCGGHISPILVAAEKLGIKIVDTRHEVTAVFAADAVARLRQSIGVAAVTAGPGLTNTITAVKNAQMAESPLLLIGGAAPTLLKGRGALQDIDQMVLFRPLCKYVARVERLRDIVPTVREAIKAAKSGCPGPVFVEFPVDVLYPYELVVKEIGFNPNAKGFIQRALNFYLRCHVSRQFGNAWAPQTITPLPTNIPMPKSEKIQEIVQLVKSAKRPVLLIGSQATLPPVKPADLVKAVEALGCPVFLGGMARGLLGKDHPLQMRQVRRDALKDADLTILAGTVCDFRLSYGRTLSKKSKIVALNRNSSQLTKNEKAFWNSDVSVQADVATSLVQVANALGANHTTTPTEWVKSLREKDDEKESANAKKMEQKLTNGFLNPLNFLRTLDQSLPDDAILVADGGDFVGSAAYIVRPRGPLQWLDPGAFGTLGVGGGFALGAKTVYPKRPVYIIWGDGSCGYSLMEYDTFARHKLPVIGIVGNDACWTQIAREQVPMFQSSVAVDLARTRYDNVAKSLGSWGETIDESNADSARKILDEALAVCRSGEQSALVNVLIGKTDFREGSISV.

Residues 2 to 22 traverse the membrane as a helical segment; it reads VLFLIIAAIIIGLLLWKWLDV. Glu102 provides a ligand contact to thiamine diphosphate. Positions 477-557 are thiamine pyrophosphate binding; it reads DFVGSAAYIV…VIGIVGNDAC (81 aa). Residues Asp528 and Asn554 each coordinate Mg(2+).

This sequence belongs to the TPP enzyme family. It depends on Mg(2+) as a cofactor. Thiamine diphosphate serves as cofactor.

The protein resides in the endoplasmic reticulum membrane. It carries out the reaction 2-hydroxyoctadecanoyl-CoA = heptadecanal + formyl-CoA. The catalysed reaction is (2R)-hydroxyhexadecanoyl-CoA = pentadecanal + formyl-CoA. Endoplasmic reticulum 2-OH acyl-CoA lyase involved in the cleavage (C1 removal) reaction in the fatty acid alpha-oxydation in a thiamine pyrophosphate (TPP)-dependent manner. This Caenorhabditis elegans protein is 2-hydroxyacyl-CoA lyase 2.